The primary structure comprises 507 residues: GMP synthase [glutamine-hydrolyzing] (507 aa).

The region spanning 4–193 (KIIILDFGSQ…VVDVCGCKQD (190 aa)) is the Glutamine amidotransferase type-1 domain. The active-site Nucleophile is Cys79. Active-site residues include His167 and Glu169. The region spanning 194–382 (WSPASFIEST…LGMPEHLITR (189 aa)) is the GMPS ATP-PPase domain. 221 to 227 (SGGVDSS) provides a ligand contact to ATP.

As to quaternary structure, homodimer.

It catalyses the reaction XMP + L-glutamine + ATP + H2O = GMP + L-glutamate + AMP + diphosphate + 2 H(+). Its pathway is purine metabolism; GMP biosynthesis; GMP from XMP (L-Gln route): step 1/1. In terms of biological role, catalyzes the synthesis of GMP from XMP. This is GMP synthase [glutamine-hydrolyzing] from Bacteroides fragilis (strain ATCC 25285 / DSM 2151 / CCUG 4856 / JCM 11019 / LMG 10263 / NCTC 9343 / Onslow / VPI 2553 / EN-2).